A 217-amino-acid chain; its full sequence is Very-long-chain (3R)-3-hydroxyacyl-CoA dehydratase PHS1 (217 aa).

Topologically, residues 1–11 are cytoplasmic; sequence MSKKLASPLSF. Residues 12 to 29 traverse the membrane as a helical segment; it reads LPLYNLLSAVGWSYLLYL. Residues 30-47 lie on the Lumenal side of the membrane; the sequence is VISLYPKVGQPAFFYQTK. A helical transmembrane segment spans residues 48–66; it reads NVATLVQCGAIIEIINSFL. Residues 67–76 are Cytoplasmic-facing; it reads GVVRSPLLTT. A helical membrane pass occupies residues 77–94; the sequence is VAQVSSRLLVVLGIFQLL. Topologically, residues 95–99 are lumenal; it reads PNTSG. The helical transmembrane segment at 100-117 threads the bilayer; sequence VQSVVYISLLLAWSITEI. The Cytoplasmic segment spans residues 118 to 142; sequence VRYLYYFFMLVFKNGAPKILILLRY. A helical membrane pass occupies residues 143-160; sequence NLFWILYPTGVASELRII. Catalysis depends on residues Y149 and E156. The Lumenal segment spans residues 161 to 178; it reads YCALNAAESQYSLLYKRI. Residues 179-196 traverse the membrane as a helical segment; it reads LIAAMLAYIPGFPMLFLH. Residues 197-217 are Cytoplasmic-facing; it reads MVAQRKKVMKSLRSSFGKKLI. Positions 214-217 match the Endoplasmic reticulum retention signal motif; it reads KKLI.

It belongs to the very long-chain fatty acids dehydratase HACD family.

Its subcellular location is the endoplasmic reticulum membrane. It is found in the vacuole membrane. The enzyme catalyses a very-long-chain (3R)-3-hydroxyacyl-CoA = a very-long-chain (2E)-enoyl-CoA + H2O. It catalyses the reaction (3R)-hydroxyeicosanoyl-CoA = (2E)-eicosenoyl-CoA + H2O. The catalysed reaction is (3R)-hydroxydocosanoyl-CoA = (2E)-docosenoyl-CoA + H2O. It carries out the reaction (3R)-hydroxyoctadecanoyl-CoA = (2E)-octadecenoyl-CoA + H2O. The enzyme catalyses (3R)-hydroxytetracosanoyl-CoA = (2E)-tetracosenoyl-CoA + H2O. It catalyses the reaction (3R)-hydroxyhexacosanoyl-CoA = (2E)-hexacosenoyl-CoA + H2O. The catalysed reaction is (3R)-hydroxyhexadecanoyl-CoA = (2E)-hexadecenoyl-CoA + H2O. It participates in lipid metabolism; fatty acid biosynthesis. In terms of biological role, catalyzes the third of the four reactions of the long-chain fatty acids elongation cycle. This endoplasmic reticulum-bound enzymatic process, allows the addition of two carbons to the chain of long- and very long-chain fatty acids/VLCFAs per cycle. This enzyme catalyzes the dehydration of the 3-hydroxyacyl-CoA intermediate into trans-2,3-enoyl-CoA, within each cycle of fatty acid elongation. Thereby, it participates in the production of VLCFAs of different chain lengths that are involved in multiple biological processes as precursors of membrane lipids and lipid mediators. This is Very-long-chain (3R)-3-hydroxyacyl-CoA dehydratase PHS1 (PHS1) from Saccharomyces cerevisiae (strain ATCC 204508 / S288c) (Baker's yeast).